The sequence spans 398 residues: Tyrosine--tRNA ligase (398 aa).

Residues 48–57 carry the 'HIGH' region motif; sequence PTGADIHLGH. The 'KMSKS' region signature appears at 235–239; that stretch reads KMSKS. Lys-238 is an ATP binding site. Residues 334-398 form the S4 RNA-binding domain; it reads VKLAYLLGAT…GKNKFVRLVL (65 aa).

The protein belongs to the class-I aminoacyl-tRNA synthetase family. TyrS type 2 subfamily. As to quaternary structure, homodimer.

The protein resides in the cytoplasm. The enzyme catalyses tRNA(Tyr) + L-tyrosine + ATP = L-tyrosyl-tRNA(Tyr) + AMP + diphosphate + H(+). Its function is as follows. Catalyzes the attachment of tyrosine to tRNA(Tyr) in a two-step reaction: tyrosine is first activated by ATP to form Tyr-AMP and then transferred to the acceptor end of tRNA(Tyr). The sequence is that of Tyrosine--tRNA ligase from Trichormus variabilis (strain ATCC 29413 / PCC 7937) (Anabaena variabilis).